The following is a 190-amino-acid chain: Threonylcarbamoyl-AMP synthase (190 aa).

A YrdC-like domain is found at 7 to 190 (GDAIAAAIDV…ALTGELFRQG (184 aa)).

This sequence belongs to the SUA5 family. TsaC subfamily.

It localises to the cytoplasm. It catalyses the reaction L-threonine + hydrogencarbonate + ATP = L-threonylcarbamoyladenylate + diphosphate + H2O. Its function is as follows. Required for the formation of a threonylcarbamoyl group on adenosine at position 37 (t(6)A37) in tRNAs that read codons beginning with adenine. Catalyzes the conversion of L-threonine, HCO(3)(-)/CO(2) and ATP to give threonylcarbamoyl-AMP (TC-AMP) as the acyladenylate intermediate, with the release of diphosphate. This chain is Threonylcarbamoyl-AMP synthase, found in Escherichia coli O157:H7.